A 220-amino-acid chain; its full sequence is UPF0319 protein YccT (220 aa).

An N-terminal signal peptide occupies residues 1–20; the sequence is MKTGALTTFLALCLPVTVFA.

The protein belongs to the UPF0319 family.

This Salmonella dublin (strain CT_02021853) protein is UPF0319 protein YccT.